Consider the following 498-residue polypeptide: NAD(P)H-quinone oxidoreductase chain 4, chloroplastic (498 aa).

14 helical membrane passes run 4 to 24 (FPWL…IFLF), 31 to 51 (VIKW…SYVF), 76 to 96 (FYWS…TGFI), 113 to 130 (LFYF…GTFS), 134 to 154 (ILLF…LLSM), 167 to 187 (FILY…GMSF), 208 to 228 (ALEI…SPII), 242 to 262 (HYST…YGLV), 272 to 292 (AHSI…IYAA), 305 to 325 (IAYS…SISD), 330 to 350 (GAIL…FLAG), 386 to 406 (LALP…GIIT), 411 to 431 (LLIT…LTPI), and 463 to 483 (FISI…DFIF).

It belongs to the complex I subunit 4 family.

The protein localises to the plastid. The protein resides in the chloroplast thylakoid membrane. It carries out the reaction a plastoquinone + NADH + (n+1) H(+)(in) = a plastoquinol + NAD(+) + n H(+)(out). The catalysed reaction is a plastoquinone + NADPH + (n+1) H(+)(in) = a plastoquinol + NADP(+) + n H(+)(out). This chain is NAD(P)H-quinone oxidoreductase chain 4, chloroplastic, found in Glycine max (Soybean).